The chain runs to 336 residues: SCP domain-containing protein 1 (336 aa).

A signal peptide spans 1–18; that stretch reads MEFKLLLVLCFNIGLICS. N47 carries an N-linked (GlcNAc...) asparagine glycan. A compositionally biased stretch (polar residues) spans 73 to 85; that stretch reads QGGNTAPSSSLPG. Residues 73-94 are disordered; sequence QGGNTAPSSSLPGVSSMPMPSA. Positions 175 to 292 constitute an SCP domain; sequence LEEHNKFRSD…YCGDMSFIAC (118 aa). N213 and N257 each carry an N-linked (GlcNAc...) asparagine glycan.

Component of the acid-insoluble and acid-soluble organic matrix of calcified layers of the shell (at protein level).

The protein resides in the secreted. The polypeptide is SCP domain-containing protein 1 (Lottia gigantea (Giant owl limpet)).